A 557-amino-acid polypeptide reads, in one-letter code: Dihydroxy-acid dehydratase (557 aa).

Aspartate 78 is a Mg(2+) binding site. Cysteine 119 lines the [2Fe-2S] cluster pocket. Mg(2+) is bound by residues aspartate 120 and lysine 121. Lysine 121 bears the N6-carboxylysine mark. Residue cysteine 192 coordinates [2Fe-2S] cluster. Residue glutamate 443 coordinates Mg(2+). Serine 469 (proton acceptor) is an active-site residue.

It belongs to the IlvD/Edd family. Homodimer. Requires [2Fe-2S] cluster as cofactor. It depends on Mg(2+) as a cofactor.

It catalyses the reaction (2R)-2,3-dihydroxy-3-methylbutanoate = 3-methyl-2-oxobutanoate + H2O. The catalysed reaction is (2R,3R)-2,3-dihydroxy-3-methylpentanoate = (S)-3-methyl-2-oxopentanoate + H2O. It functions in the pathway amino-acid biosynthesis; L-isoleucine biosynthesis; L-isoleucine from 2-oxobutanoate: step 3/4. It participates in amino-acid biosynthesis; L-valine biosynthesis; L-valine from pyruvate: step 3/4. Functionally, functions in the biosynthesis of branched-chain amino acids. Catalyzes the dehydration of (2R,3R)-2,3-dihydroxy-3-methylpentanoate (2,3-dihydroxy-3-methylvalerate) into 2-oxo-3-methylpentanoate (2-oxo-3-methylvalerate) and of (2R)-2,3-dihydroxy-3-methylbutanoate (2,3-dihydroxyisovalerate) into 2-oxo-3-methylbutanoate (2-oxoisovalerate), the penultimate precursor to L-isoleucine and L-valine, respectively. This Persephonella marina (strain DSM 14350 / EX-H1) protein is Dihydroxy-acid dehydratase.